A 634-amino-acid polypeptide reads, in one-letter code: Glutamate--tRNA ligase (634 aa).

Residues 108 to 118 (PNPSGPLHIGH) carry the 'HIGH' region motif.

It belongs to the class-I aminoacyl-tRNA synthetase family. Glutamate--tRNA ligase type 2 subfamily.

Its subcellular location is the cytoplasm. It catalyses the reaction tRNA(Glu) + L-glutamate + ATP = L-glutamyl-tRNA(Glu) + AMP + diphosphate. Catalyzes the attachment of glutamate to tRNA(Glu) in a two-step reaction: glutamate is first activated by ATP to form Glu-AMP and then transferred to the acceptor end of tRNA(Glu). The polypeptide is Glutamate--tRNA ligase (Methanoregula boonei (strain DSM 21154 / JCM 14090 / 6A8)).